We begin with the raw amino-acid sequence, 184 residues long: SsrA-binding protein (184 aa).

The segment covering 1–11 has biased composition (polar residues); it reads MAAKKSTPTDS. Residues 1–31 are disordered; that stretch reads MAAKKSTPTDSGKSKGKKNKAQKGAGQKGAG.

The protein belongs to the SmpB family.

Its subcellular location is the cytoplasm. Its function is as follows. Required for rescue of stalled ribosomes mediated by trans-translation. Binds to transfer-messenger RNA (tmRNA), required for stable association of tmRNA with ribosomes. tmRNA and SmpB together mimic tRNA shape, replacing the anticodon stem-loop with SmpB. tmRNA is encoded by the ssrA gene; the 2 termini fold to resemble tRNA(Ala) and it encodes a 'tag peptide', a short internal open reading frame. During trans-translation Ala-aminoacylated tmRNA acts like a tRNA, entering the A-site of stalled ribosomes, displacing the stalled mRNA. The ribosome then switches to translate the ORF on the tmRNA; the nascent peptide is terminated with the 'tag peptide' encoded by the tmRNA and targeted for degradation. The ribosome is freed to recommence translation, which seems to be the essential function of trans-translation. In Corynebacterium jeikeium (strain K411), this protein is SsrA-binding protein.